Reading from the N-terminus, the 259-residue chain is 3-deoxy-manno-octulosonate cytidylyltransferase (259 aa).

Belongs to the KdsB family.

The protein resides in the cytoplasm. It carries out the reaction 3-deoxy-alpha-D-manno-oct-2-ulosonate + CTP = CMP-3-deoxy-beta-D-manno-octulosonate + diphosphate. Its pathway is nucleotide-sugar biosynthesis; CMP-3-deoxy-D-manno-octulosonate biosynthesis; CMP-3-deoxy-D-manno-octulosonate from 3-deoxy-D-manno-octulosonate and CTP: step 1/1. The protein operates within bacterial outer membrane biogenesis; lipopolysaccharide biosynthesis. In terms of biological role, activates KDO (a required 8-carbon sugar) for incorporation into bacterial lipopolysaccharide in Gram-negative bacteria. The polypeptide is 3-deoxy-manno-octulosonate cytidylyltransferase (Aeromonas salmonicida (strain A449)).